We begin with the raw amino-acid sequence, 1626 residues long: DNA topoisomerase 2-beta (1626 aa).

Ala2 is modified (N-acetylalanine). Lys3 carries the N6-acetyllysine modification. Residues Gln28, Asn29, Lys33, and Lys34 each participate in a glycyl lysine isopeptide (Lys-Gly) (interchain with G-Cter in SUMO2) cross-link. ATP-binding positions include Asn112, Asn141, and Ser169–Asn171. Residues Lys177 and Lys178 each participate in a glycyl lysine isopeptide (Lys-Gly) (interchain with G-Cter in SUMO2) cross-link. Gly182–Lys189 serves as a coordination point for ATP. Glycyl lysine isopeptide (Lys-Gly) (interchain with G-Cter in SUMO2) cross-links involve residues Lys228 and Lys299. The interval Lys363 to Lys365 is interaction with DNA. Residues Lys367 and Lys373 each participate in a glycyl lysine isopeptide (Lys-Gly) (interchain with G-Cter in SUMO2) cross-link. ATP is bound at residue Gln397 to Lys399. Residues Lys437, Lys439, and Lys446 each participate in a glycyl lysine isopeptide (Lys-Gly) (interchain with G-Cter in SUMO2) cross-link. A Toprim domain is found at Cys476 to Glu593. Mg(2+)-binding residues include Glu482, Asp562, and Asp564. Glycyl lysine isopeptide (Lys-Gly) (interchain with G-Cter in SUMO2) cross-links involve residues Lys600, Lys605, Lys635, Lys643, Lys646, Lys676, and Lys712. In terms of domain architecture, Topo IIA-type catalytic spans Ile736–Leu1189. The active-site O-(5'-phospho-DNA)-tyrosine intermediate is the Tyr826. Positions Lys1011 to Ser1020 are interaction with DNA. The Nuclear export signal signature appears at Glu1034–Phe1044. Residue Lys1092 forms a Glycyl lysine isopeptide (Lys-Gly) (interchain with G-Cter in SUMO2) linkage. Positions Ala1110–Gly1140 are disordered. Glycyl lysine isopeptide (Lys-Gly) (interchain with G-Cter in SUMO2) cross-links involve residues Lys1214, Lys1217, Lys1226, and Lys1227. A Phosphoserine modification is found at Ser1236. Glycyl lysine isopeptide (Lys-Gly) (interchain with G-Cter in SUMO2) cross-links involve residues Lys1250, Lys1262, and Lys1271. The interval Phe1274–Arg1604 is disordered. Thr1292 bears the Phosphothreonine mark. Residues Lys1323 and Lys1327 each participate in a glycyl lysine isopeptide (Lys-Gly) (interchain with G-Cter in SUMO2) cross-link. 2 stretches are compositionally biased toward basic and acidic residues: residues Pro1334–Ser1344 and Ser1358–Tyr1370. A phosphoserine mark is found at Ser1336, Ser1340, Ser1342, Ser1344, and Ser1358. Tyr1370 bears the Phosphotyrosine mark. A compositionally biased stretch (acidic residues) spans Phe1374–Leu1392. A Phosphoserine modification is found at Ser1375. A Glycyl lysine isopeptide (Lys-Gly) (interchain with G-Cter in SUMO2) cross-link involves residue Lys1398. Ser1400 carries the post-translational modification Phosphoserine. A Phosphothreonine modification is found at Thr1403. Ser1413 is modified (phosphoserine). Tyr1421 bears the Phosphotyrosine mark. Ser1424 carries the phosphoserine modification. A compositionally biased stretch (basic and acidic residues) spans Ala1430 to Gln1442. Lys1440 is covalently cross-linked (Glycyl lysine isopeptide (Lys-Gly) (interchain with G-Cter in SUMO2)). Phosphoserine is present on residues Ser1441, Ser1452, and Ser1454. A Glycyl lysine isopeptide (Lys-Gly) (interchain with G-Cter in SUMO2) cross-link involves residue Lys1456. Over residues Lys1456–Ser1466 the composition is skewed to basic and acidic residues. Phosphoserine is present on residues Ser1461, Ser1466, Ser1473, and Ser1476. Lys1490 participates in a covalent cross-link: Glycyl lysine isopeptide (Lys-Gly) (interchain with G-Cter in SUMO2). The interaction with PLSCR1 stretch occupies residues Lys1506 to Lys1512. Residues Ser1522, Ser1524, and Ser1526 each carry the phosphoserine modification. A compositionally biased stretch (basic residues) spans Gly1539–Ala1549. Phosphoserine occurs at positions 1550 and 1552. Positions Lys1563–Lys1574 are enriched in basic residues. Position 1575 is a phosphothreonine (Thr1575). Residues Ser1576 and Ser1581 each carry the phosphoserine modification. Thr1592 carries the post-translational modification Phosphothreonine. Ser1596 is subject to Phosphoserine. Tyr1609 is subject to Phosphotyrosine. The residue at position 1613 (Ser1613) is a Phosphoserine.

The protein belongs to the type II topoisomerase family. In terms of assembly, homodimer. Interacts with KIAA1210. Interacts with PLSCR1. It depends on Mg(2+) as a cofactor. Mn(2+) serves as cofactor. The cofactor is Ca(2+). (Microbial infection) Deubiquitinated by Epstein-Barr virus BPLF1; leading to stabilized SUMOylated TOP2A trapped in cleavage complexes, which halts the DNA damage response to TOP2A-induced double-strand DNA breaks. In terms of processing, SUMOylated. In terms of tissue distribution, expressed in the tonsil, spleen, lymph node, thymus, skin, pancreas, testis, colon, kidney, liver, brain and lung. Also found in breast, colon and lung carcinomas, Hodgkin's disease, large-cell non-Hodgkin's lymphoma, lymphocytic lymphomas and seminomas.

Its subcellular location is the nucleus. The protein resides in the nucleolus. It localises to the nucleoplasm. The catalysed reaction is ATP-dependent breakage, passage and rejoining of double-stranded DNA.. Functionally, key decatenating enzyme that alters DNA topology by binding to two double-stranded DNA molecules, generating a double-stranded break in one of the strands, passing the intact strand through the broken strand, and religating the broken strand. Plays a role in B-cell differentiation. The sequence is that of DNA topoisomerase 2-beta (TOP2B) from Homo sapiens (Human).